A 2609-amino-acid chain; its full sequence is Mycosubtilin synthase subunit C (2609 aa).

The segment at Pro-258–Val-1628 is domain 1 (D-serine-activating). An adenylation 1 region spans residues Thr-288–Val-695. The Carrier 1 domain occupies Ala-771–Thr-845. The residue at position 806 (Ser-806) is an O-(pantetheine 4'-phosphoryl)serine. The tract at residues Ile-853–Phe-1312 is epimerization 1. Positions Ile-1322–Gln-1623 are condensation 1. Positions Pro-1778 to Pro-2359 are domain 2 (isoleucine-activating). The adenylation 2 stretch occupies residues Thr-1808–Val-2205. One can recognise a Carrier 2 domain in the interval Ala-2282–Ala-2357. O-(pantetheine 4'-phosphoryl)serine is present on Ser-2317. The thioesterase stretch occupies residues Ile-2375–Met-2581.

It belongs to the ATP-dependent AMP-binding enzyme family. Pantetheine 4'-phosphate serves as cofactor.

In terms of biological role, this protein is a multifunctional enzyme, able to activate and polymerize the amino acids Ser and Asn as part of the synthesis of mycosubtilin. The Ser residue is further epimerized to the D-isomer form. The activation sites for these amino acids consist of individual domains. The polypeptide is Mycosubtilin synthase subunit C (mycC) (Bacillus subtilis).